Consider the following 318-residue polypeptide: Isoflavone reductase (318 aa).

NADP(+) contacts are provided by residues 11 to 17 (GATGAIG), arginine 36, and lysine 44. Lysine 144 functions as the Proton acceptor in the catalytic mechanism. Arginine 148 provides a ligand contact to NADP(+).

This sequence belongs to the NmrA-type oxidoreductase family. Isoflavone reductase subfamily.

The catalysed reaction is (3R)-vestitone + NADP(+) = 2'-hydroxyformononetin + NADPH + 2 H(+). It participates in phytoalexin biosynthesis; pterocarpan phytoalexin biosynthesis. In terms of biological role, reduces achiral isoflavones to chiral isoflavanones during the biosynthesis of chiral pterocarpan phytoalexins. The reduction product (sophrol) is a third isomer, which represents the penultimate intermediate in the synthesis of the phytoalexin (+)-pisatin, the major phytoalexin in pea. The protein is Isoflavone reductase (IFR) of Pisum sativum (Garden pea).